Reading from the N-terminus, the 551-residue chain is Membrane protein insertase YidC (551 aa).

A helical membrane pass occupies residues 6 to 26 (YFLWGALFISGYLLFLQWSQD). The segment covering 34 to 50 (SVAQSTQSQSETNSQMS) has biased composition (low complexity). A disordered region spans residues 34–68 (SVAQSTQSQSETNSQMSDDLPMATQSTTEANAEIP). Positions 56 to 68 (ATQSTTEANAEIP) are enriched in polar residues. The next 5 membrane-spanning stretches (helical) occupy residues 340-360 (TVDY…LTLI), 363-383 (FVIN…AIFF), 433-453 (LGGC…YWVL), 464-484 (FFLW…PILM), and 509-529 (IMPV…VLYW).

This sequence belongs to the OXA1/ALB3/YidC family. Type 1 subfamily. As to quaternary structure, interacts with the Sec translocase complex via SecD. Specifically interacts with transmembrane segments of nascent integral membrane proteins during membrane integration.

It is found in the cell inner membrane. Required for the insertion and/or proper folding and/or complex formation of integral membrane proteins into the membrane. Involved in integration of membrane proteins that insert both dependently and independently of the Sec translocase complex, as well as at least some lipoproteins. Aids folding of multispanning membrane proteins. This is Membrane protein insertase YidC from Marinomonas sp. (strain MWYL1).